A 1345-amino-acid polypeptide reads, in one-letter code: Probable membrane antigen 75 (1345 aa).

It is found in the virion tegument. The sequence is that of Probable membrane antigen 75 (75) from Equine herpesvirus 2 (strain 86/87) (EHV-2).